Here is an 89-residue protein sequence, read N- to C-terminus: MSITPERKTALVKEYALKDGDTGSPEVQVAILTERIANLTEHFKTHVKDNHSRRGLLKLVSQRRQLLDYVKGRDEPRYKALIERLGIRR.

It belongs to the universal ribosomal protein uS15 family. In terms of assembly, part of the 30S ribosomal subunit. Forms a bridge to the 50S subunit in the 70S ribosome, contacting the 23S rRNA.

In terms of biological role, one of the primary rRNA binding proteins, it binds directly to 16S rRNA where it helps nucleate assembly of the platform of the 30S subunit by binding and bridging several RNA helices of the 16S rRNA. Functionally, forms an intersubunit bridge (bridge B4) with the 23S rRNA of the 50S subunit in the ribosome. This chain is Small ribosomal subunit protein uS15, found in Beijerinckia indica subsp. indica (strain ATCC 9039 / DSM 1715 / NCIMB 8712).